The sequence spans 66 residues: Large ribosomal subunit protein bL35 (66 aa).

Basic residues predominate over residues 1 to 16; sequence MPKQKTHRASAKRFKR. A disordered region spans residues 1-20; it reads MPKQKTHRASAKRFKRTGSG.

The protein belongs to the bacterial ribosomal protein bL35 family.

This Streptococcus thermophilus (strain CNRZ 1066) protein is Large ribosomal subunit protein bL35.